A 209-amino-acid polypeptide reads, in one-letter code: tRNA (guanine-N(7)-)-methyltransferase (209 aa).

Positions 40, 65, and 114 each coordinate S-adenosyl-L-methionine. D114 is a catalytic residue. Substrate-binding positions include D150 and 188–191 (TAFE).

Belongs to the class I-like SAM-binding methyltransferase superfamily. TrmB family.

It carries out the reaction guanosine(46) in tRNA + S-adenosyl-L-methionine = N(7)-methylguanosine(46) in tRNA + S-adenosyl-L-homocysteine. Its pathway is tRNA modification; N(7)-methylguanine-tRNA biosynthesis. In terms of biological role, catalyzes the formation of N(7)-methylguanine at position 46 (m7G46) in tRNA. This Bdellovibrio bacteriovorus (strain ATCC 15356 / DSM 50701 / NCIMB 9529 / HD100) protein is tRNA (guanine-N(7)-)-methyltransferase.